The sequence spans 475 residues: Bifunctional protein HldE (475 aa).

The interval 1-321 (MADKIDISLY…RALHQITASH (321 aa)) is ribokinase. 197–200 (NLKE) contacts ATP. Aspartate 266 is an active-site residue. Residues 346–475 (MTNGCFDILH…TSRLVEKMLN (130 aa)) are cytidylyltransferase.

This sequence in the N-terminal section; belongs to the carbohydrate kinase PfkB family. It in the C-terminal section; belongs to the cytidylyltransferase family. As to quaternary structure, homodimer.

It carries out the reaction D-glycero-beta-D-manno-heptose 7-phosphate + ATP = D-glycero-beta-D-manno-heptose 1,7-bisphosphate + ADP + H(+). The enzyme catalyses D-glycero-beta-D-manno-heptose 1-phosphate + ATP + H(+) = ADP-D-glycero-beta-D-manno-heptose + diphosphate. It functions in the pathway nucleotide-sugar biosynthesis; ADP-L-glycero-beta-D-manno-heptose biosynthesis; ADP-L-glycero-beta-D-manno-heptose from D-glycero-beta-D-manno-heptose 7-phosphate: step 1/4. Its pathway is nucleotide-sugar biosynthesis; ADP-L-glycero-beta-D-manno-heptose biosynthesis; ADP-L-glycero-beta-D-manno-heptose from D-glycero-beta-D-manno-heptose 7-phosphate: step 3/4. Functionally, catalyzes the phosphorylation of D-glycero-D-manno-heptose 7-phosphate at the C-1 position to selectively form D-glycero-beta-D-manno-heptose-1,7-bisphosphate. Catalyzes the ADP transfer from ATP to D-glycero-beta-D-manno-heptose 1-phosphate, yielding ADP-D-glycero-beta-D-manno-heptose. In Coxiella burnetii (strain RSA 331 / Henzerling II), this protein is Bifunctional protein HldE.